We begin with the raw amino-acid sequence, 758 residues long: Dachshund homolog 1 (758 aa).

Disordered stretches follow at residues methionine 1–asparagine 105 and isoleucine 134–asparagine 185. Positions isoleucine 20–threonine 53 are enriched in low complexity. The span at threonine 73–serine 102 shows a compositional bias: gly residues. Residues serine 140 to serine 163 show a composition bias toward low complexity. A compositionally biased stretch (polar residues) spans serine 174–asparagine 185. The DACHbox-N stretch occupies residues lysine 189–leucine 275. The segment at lysine 189 to lysine 384 is interaction with SIX6 and HDAC3. Disordered stretches follow at residues threonine 280 to serine 302, serine 358 to histidine 414, serine 474 to valine 532, and methionine 544 to methionine 564. 3 stretches are compositionally biased toward polar residues: residues arginine 292–asparagine 301, serine 358–glycine 380, and leucine 387–isoleucine 399. Residue serine 491 is modified to Phosphoserine. A compositionally biased stretch (low complexity) spans serine 506–glutamate 524. Residues lysine 555–methionine 564 show a composition bias toward basic and acidic residues. Positions serine 616–leucine 696 are DACHbox-C. Positions glycine 627–alanine 706 are interaction with SIN3A. The stretch at lysine 630 to serine 718 forms a coiled coil.

It belongs to the DACH/dachshund family. As to quaternary structure, interacts with SIX1, SIX6 and EYA3. Interacts with NCOR1 and HDAC3 through its N-terminus. Interacts with SIN3A through its C-terminus. Interacts with SMAD3 and SMAD4. As to expression, widely expressed. Isoform 2 is found in brain, heart, kidney, liver, leukocytes and spleen. Isoform 3 is found in liver and heart. Isoform 4 is found in spleen.

The protein localises to the nucleus. Its function is as follows. Transcription factor that is involved in regulation of organogenesis. Seems to be a regulator of SIX1, SIX6 and probably SIX5. Corepression of precursor cell proliferation in myoblasts by SIX1 is switched to coactivation through recruitment of EYA3 to the SIX1-DACH1 complex. Transcriptional activation also seems to involve association of CREBBP. Seems to act as a corepressor of SIX6 in regulating proliferation by directly repressing cyclin-dependent kinase inhibitors, including the p27Kip1 promoter. Inhibits TGF-beta signaling through interaction with SMAD4 and NCOR1. Binds to chromatin DNA via its DACHbox-N domain. In Homo sapiens (Human), this protein is Dachshund homolog 1 (DACH1).